The chain runs to 378 residues: Ferredoxin--NADP reductase, embryo isozyme, chloroplastic (378 aa).

The transit peptide at 1–62 (MASALGAQAS…SRHMNKIFSM (62 aa)) directs the protein to the chloroplast. Residues 93-221 (KEPYTATIVS…TGPSGKIMLL (129 aa)) enclose the FAD-binding FR-type domain. FAD contacts are provided by residues 153-156 (RLYS), 174-176 (CVR), Tyr180, 195-197 (ICS), and Thr237. The NADP(+) site is built by Ser156 and Arg176. Residues Thr237, 269 to 270 (VA), 299 to 300 (SR), Lys309, 337 to 338 (GL), and Glu376 contribute to the NADP(+) site.

Belongs to the ferredoxin--NADP reductase type 1 family. It depends on FAD as a cofactor.

The protein localises to the plastid. It is found in the chloroplast. The enzyme catalyses 2 reduced [2Fe-2S]-[ferredoxin] + NADP(+) + H(+) = 2 oxidized [2Fe-2S]-[ferredoxin] + NADPH. Its pathway is energy metabolism; photosynthesis. Its function is as follows. May play a key role in regulating the relative amounts of cyclic and non-cyclic electron flow to meet the demands of the plant for ATP and reducing power. Is involved in nitrate assimilation. The sequence is that of Ferredoxin--NADP reductase, embryo isozyme, chloroplastic from Oryza sativa subsp. japonica (Rice).